A 337-amino-acid chain; its full sequence is MDFIDEVKLYLKAGDGGDGCASFRREKFVEFGGPNGGNGGKGGDIIFISDANLNTLLNFRCRRHIKASSGKSGTSRDRSGTAGKDIILKVPVGTQIIDEESEEVIVDLDKPDMEFQVVQGGKGGLGNTNFKSSTNRAPRHFTHGQPGEERNIVLKLKVLSDVGIIGMPNVGKSKFLTRCSNSDTKVGDYEFTTIRPHLGVAKVDYSEIVIADIPGIIADAHLGVGLGHKFLKHIERCKILLHLIDVTHDEIISAYNCTHNELKLYNSDLVEKEEIVVLNKCDLLEETEILEKKNHLANYLDREVLCLSIDDDLQPILRLLNEKVKTKEINVYDPFKM.

Positions 1 to 159 constitute an Obg domain; the sequence is MDFIDEVKLY…RNIVLKLKVL (159 aa). The OBG-type G domain occupies 160-329; the sequence is SDVGIIGMPN…LNEKVKTKEI (170 aa). Residues 166 to 173, 191 to 195, 212 to 215, 279 to 282, and 310 to 312 each bind GTP; these read GMPNVGKS, FTTIR, DIPG, NKCD, and DDD. Ser173 and Thr193 together coordinate Mg(2+).

This sequence belongs to the TRAFAC class OBG-HflX-like GTPase superfamily. OBG GTPase family. As to quaternary structure, monomer. The cofactor is Mg(2+).

The protein resides in the cytoplasm. Its function is as follows. An essential GTPase which binds GTP, GDP and possibly (p)ppGpp with moderate affinity, with high nucleotide exchange rates and a fairly low GTP hydrolysis rate. Plays a role in control of the cell cycle, stress response, ribosome biogenesis and in those bacteria that undergo differentiation, in morphogenesis control. The sequence is that of GTPase Obg from Wolbachia pipientis subsp. Culex pipiens (strain wPip).